The sequence spans 1729 residues: 1,3-beta-glucan synthase component bgs1 (1729 aa).

Position 23 is a phosphoserine (Ser23). 6 helical membrane passes run 378 to 398 (WTAC…AVVF), 416 to 436 (SMLL…FIFA), 448 to 468 (LVVG…YSIT), 503 to 523 (FVSW…SYFF), 546 to 566 (YILG…LLYL), and 577 to 597 (YLWY…CLGI). Ser784 and Ser788 each carry phosphoserine. The next 8 membrane-spanning stretches (helical) occupy residues 1180-1200 (MVIM…GAMY), 1237-1257 (ILSI…CELG), 1337-1357 (MLLF…WITL), 1440-1460 (YGEI…FLFI), 1484-1504 (VAPL…GIML), 1515-1535 (YGVY…VVVF), 1550-1572 (LLGF…ICFL), and 1678-1698 (ATLY…PFVF).

It belongs to the glycosyltransferase 48 family. In terms of assembly, component of the 1,3-beta-glucan synthase (GS) complex, composed of at least the alternate catalytic subunits bgs1, bgs2, bgs3, and bgs4, and a regulatory subunit chr4.

It is found in the cell membrane. The protein resides in the cell septum. The enzyme catalyses [(1-&gt;3)-beta-D-glucosyl](n) + UDP-alpha-D-glucose = [(1-&gt;3)-beta-D-glucosyl](n+1) + UDP + H(+). Its function is as follows. Alternate catalytic subunit of the 1,3-beta-glucan synthase (GS) complex. Synthesizes 1,3-beta-glucan, a major structural component of the fungal cell wall. Required for the assembly of the division septum and maintenance of cell polarity. This chain is 1,3-beta-glucan synthase component bgs1 (bgs1), found in Schizosaccharomyces pombe (strain 972 / ATCC 24843) (Fission yeast).